A 361-amino-acid polypeptide reads, in one-letter code: MFPASTPHPCPHPYPPTAAKAGDGWRFGARGCRPEPPSFLPGYRQLMAAEYFDSYQRAQLMALLSRMGPRPVSSRDAAVQVNPRRDASVQCSLGRRTLQPGRRRASPDARPGSCQPRSPARAGRPPRSWRTVALYSPVTFGGLSSSLEVAGDRQTPTKGEGRPAPTGTREPEPGEVAVMKAVPQPQSEEGDVQAEGQDGQEQPPREDPDSVAAMQSEPGSEEPPPAVEMAQDPSDVAASRDRASPQSTEQDKERLRFQFLEQKYGYYHCKDCNIRWESAYVWCVQGTSKVYFKQFCRVCEKSYNPYRVEDITCQSCKRTRCACPVRLRHVDPKRPHRQDLCGRCKDKRLSCDSTFSFKYII.

Disordered regions lie at residues glycine 68–tryptophan 129 and glycine 142–lysine 252. Low complexity predominate over residues proline 116 to serine 128. A Phosphothreonine modification is found at threonine 155. Over residues alanine 238 to lysine 252 the composition is skewed to basic and acidic residues. The segment at lysine 263–aspartate 346 adopts a 3CxxC-type zinc-finger fold.

It belongs to the ZAR1 family. In terms of assembly, interacts with YBX2. Post-translationally, phosphorylation by CDK1 does not regulate formation of MARDO (mitochondria-associated ribonucleoprotein domain) membraneless compartment. Ubiquitinated and degradaded by the proteasome during oocyte meiotic maturation, leading to MARDO (mitochondria-associated ribonucleoprotein domain) membraneless compartment dissolution.

The protein resides in the cytoplasm. It localises to the cytoplasmic ribonucleoprotein granule. Functionally, mRNA-binding protein that mediates formation of MARDO (mitochondria-associated ribonucleoprotein domain), a membraneless compartment that stores maternal mRNAs in oocytes. MARDO assembly around mitochondria is directed by an increase in mitochondrial membrane potential during oocyte growth. Promotes formation of MARDO phase-separated membraneless compartment by undergoing liquid-liquid phase separation upon binding to maternal mRNAs. Binds to the 3'-UTR of maternal mRNAs. Maternal mRNAs stored in the MARDO are translationally repressed. Essential for female fertility and oocyte-to-embryo transition by coordinating maternal mRNA storage, translation and degradation. This is Zygote arrest protein 1 from Rattus norvegicus (Rat).